The primary structure comprises 234 residues: Ribonuclease 3 (234 aa).

The region spanning 6–134 is the RNase III domain; sequence RKSLEERVGH…IVGALYLDGG (129 aa). A Mg(2+)-binding site is contributed by E47. D51 is an active-site residue. Mg(2+)-binding residues include S120 and E123. E123 is a catalytic residue. The 70-residue stretch at 162–231 folds into the DRBM domain; sequence DYKTRLQELV…AKNALEMKYK (70 aa).

This sequence belongs to the ribonuclease III family. Homodimer. The cofactor is Mg(2+).

The protein resides in the cytoplasm. The enzyme catalyses Endonucleolytic cleavage to 5'-phosphomonoester.. Functionally, digests double-stranded RNA. Involved in the processing of primary rRNA transcript to yield the immediate precursors to the large and small rRNAs (23S and 16S). Processes some mRNAs, and tRNAs when they are encoded in the rRNA operon. Processes pre-crRNA and tracrRNA of type II CRISPR loci if present in the organism. This is Ribonuclease 3 from Bdellovibrio bacteriovorus (strain ATCC 15356 / DSM 50701 / NCIMB 9529 / HD100).